The following is a 455-amino-acid chain: T-box protein VegT-A (455 aa).

3 disordered regions span residues 21 to 40, 229 to 262, and 295 to 346; these read SNCA…SSQD, REQE…DSPE, and ANQG…EPSS. Positions 57-230 form a DNA-binding region, T-box; sequence LWSQFHQEGT…HNPFAKGFRE (174 aa). Basic and acidic residues predominate over residues 229–241; it reads REQERSHKRDDVL. Residues 308 to 324 show a composition bias toward polar residues; sequence GANQEQQVPTSSSNFYN.

Forms a repression complex on the promoters of the nodal/nr1 and siamois genes with the maternal factors tcf7l1/tcf3 and pouf5.1/oct-25. Interacts (via C-terminus) with tcf7l1/tcf3 (via N-terminus). Also interacts with the other POU-domain transcription factors pou5f1.2/oct-91 and pou5f1.3/oct-60. Uniformly distributed in stage I oocytes but becomes localized to the vegetal hemisphere by stage II and remains so thereafter throughout oogenesis and the early embryonic cleavage stages. Zygotic expression parallels blastopore formation and shifts from dorsal expression in the marginal zone of late blastula and early gastrula stages to a ventral/lateral expression at the posterior end of later stage embryos. Expression is excluded from the notochord. In tailbud and tadpole stages, expressed exclusively in a subset of posterior Rohon-Beard neurons.

Its subcellular location is the nucleus. Functionally, transcription factor required for both mesoderm and endoderm formation in the embryo; signaling determinants and concentration levels may determine which germ layer is formed. Acts together with beta-catenin to activate genes that are responsible for mesoderm induction including wnt-8, eomes t/bra, siamois, mix1 and sox17. Directly binds to promoter DNA. Patterns the mesoderm along the dorsoventral and posterior axis. Activates siamois gene transcription when alone or in combination with beta-catenin, but inhibits siamois transcription in combination with pou5f1.1/oct-25. The protein is T-box protein VegT-A (vegt-a) of Xenopus laevis (African clawed frog).